A 644-amino-acid polypeptide reads, in one-letter code: Type III restriction-modification enzyme EcoP15I Mod subunit (644 aa).

The segment at 123–126 is binding of S-adenosyl methionine; sequence DPPY.

This sequence belongs to the N(4)/N(6)-methyltransferase family. Forms a homodimer capable of methylating the target sequence in the absence of Res. A heterotetramer with stoichiometry Res(2)Mod(2). A heterotrimer with stoichiometry Res(1)Mod(2).

The enzyme catalyses a 2'-deoxyadenosine in DNA + S-adenosyl-L-methionine = an N(6)-methyl-2'-deoxyadenosine in DNA + S-adenosyl-L-homocysteine + H(+). Functionally, a beta subtype methylase that binds the system-specific DNA recognition site 5'-CAGCAG-3' and methylates A-5 (of only 1 strand as the other does not have an A residue). DNA restriction requires both the Res and Mod subunits. The A-5 nucleotide flips into the catalytic pocket of one Mod subunit for modification, while the other Mod subunit makes most of the DNA sequence-specific contacts. The chain is Type III restriction-modification enzyme EcoP15I Mod subunit from Escherichia coli.